A 157-amino-acid polypeptide reads, in one-letter code: 3-hydroxybutyryl-CoA dehydratase (157 aa).

The MaoC-like domain occupies 22–120; it reads KKEISSSDVV…IPERRRARLA (99 aa).

It carries out the reaction (3R)-3-hydroxybutanoyl-CoA = (2E)-butenoyl-CoA + H2O. Involved in the regeneration of glyoxylate from a molecule of acetyl-CoA. The chain is 3-hydroxybutyryl-CoA dehydratase from Methylorubrum extorquens (strain ATCC 14718 / DSM 1338 / JCM 2805 / NCIMB 9133 / AM1) (Methylobacterium extorquens).